The sequence spans 450 residues: Tubulin alpha-2 chain (450 aa).

Q11 is a GTP binding site. K40 carries the N6-acetyllysine modification. The GTP site is built by E71, G144, T145, T179, N206, and N228. Position 71 (E71) interacts with Mg(2+). E254 is an active-site residue.

This sequence belongs to the tubulin family. Dimer of alpha and beta chains. A typical microtubule is a hollow water-filled tube with an outer diameter of 25 nm and an inner diameter of 15 nM. Alpha-beta heterodimers associate head-to-tail to form protofilaments running lengthwise along the microtubule wall with the beta-tubulin subunit facing the microtubule plus end conferring a structural polarity. Microtubules usually have 13 protofilaments but different protofilament numbers can be found in some organisms and specialized cells. The cofactor is Mg(2+). Post-translationally, undergoes a tyrosination/detyrosination cycle, the cyclic removal and re-addition of a C-terminal tyrosine residue by the enzymes tubulin tyrosine carboxypeptidase (TTCP) and tubulin tyrosine ligase (TTL), respectively. In terms of processing, acetylation of alpha chains at Lys-40 stabilizes microtubules and affects affinity and processivity of microtubule motors. This modification has a role in multiple cellular functions, ranging from cell motility, cell cycle progression or cell differentiation to intracellular trafficking and signaling.

It is found in the cytoplasm. The protein resides in the cytoskeleton. The enzyme catalyses GTP + H2O = GDP + phosphate + H(+). Tubulin is the major constituent of microtubules, a cylinder consisting of laterally associated linear protofilaments composed of alpha- and beta-tubulin heterodimers. Microtubules grow by the addition of GTP-tubulin dimers to the microtubule end, where a stabilizing cap forms. Below the cap, tubulin dimers are in GDP-bound state, owing to GTPase activity of alpha-tubulin. In Gossypium hirsutum (Upland cotton), this protein is Tubulin alpha-2 chain.